The primary structure comprises 473 residues: Ribulose bisphosphate carboxylase large chain (473 aa).

Substrate-binding residues include Asn116 and Thr166. The active-site Proton acceptor is the Lys168. Lys170 is a substrate binding site. 3 residues coordinate Mg(2+): Lys194, Asp196, and Glu197. Lys194 carries the post-translational modification N6-carboxylysine. His287 functions as the Proton acceptor in the catalytic mechanism. Substrate is bound by residues Arg288, His320, and Ser372.

Belongs to the RuBisCO large chain family. Type I subfamily. As to quaternary structure, heterohexadecamer of 8 large chains and 8 small chains. Mg(2+) serves as cofactor.

The enzyme catalyses 2 (2R)-3-phosphoglycerate + 2 H(+) = D-ribulose 1,5-bisphosphate + CO2 + H2O. The catalysed reaction is D-ribulose 1,5-bisphosphate + O2 = 2-phosphoglycolate + (2R)-3-phosphoglycerate + 2 H(+). RuBisCO catalyzes two reactions: the carboxylation of D-ribulose 1,5-bisphosphate, the primary event in carbon dioxide fixation, as well as the oxidative fragmentation of the pentose substrate. Both reactions occur simultaneously and in competition at the same active site. This is Ribulose bisphosphate carboxylase large chain from Alkalilimnicola ehrlichii (strain ATCC BAA-1101 / DSM 17681 / MLHE-1).